Reading from the N-terminus, the 292-residue chain is Phosphatidylglycerol--prolipoprotein diacylglyceryl transferase (292 aa).

The next 3 membrane-spanning stretches (helical) occupy residues 18–38 (LFGV…GLLI), 67–87 (LLTW…VLFY), and 105–125 (GGMS…AFCL). R150 is a binding site for a 1,2-diacyl-sn-glycero-3-phospho-(1'-sn-glycerol). The next 3 membrane-spanning stretches (helical) occupy residues 193–213 (QIYE…LLVW), 222–242 (GSVS…VEFV), and 266–286 (GLTM…YLIL).

Belongs to the Lgt family.

The protein localises to the cell inner membrane. It carries out the reaction L-cysteinyl-[prolipoprotein] + a 1,2-diacyl-sn-glycero-3-phospho-(1'-sn-glycerol) = an S-1,2-diacyl-sn-glyceryl-L-cysteinyl-[prolipoprotein] + sn-glycerol 1-phosphate + H(+). Its pathway is protein modification; lipoprotein biosynthesis (diacylglyceryl transfer). Its function is as follows. Catalyzes the transfer of the diacylglyceryl group from phosphatidylglycerol to the sulfhydryl group of the N-terminal cysteine of a prolipoprotein, the first step in the formation of mature lipoproteins. The chain is Phosphatidylglycerol--prolipoprotein diacylglyceryl transferase from Cereibacter sphaeroides (strain ATCC 17029 / ATH 2.4.9) (Rhodobacter sphaeroides).